A 524-amino-acid polypeptide reads, in one-letter code: Ankyrin repeat-containing protein At5g02620 (524 aa).

ANK repeat units lie at residues 16–45 (RDDTPLHTAVREGKTDLLLEMIGEHDGVEL), 55–84 (SGETALYVAAEYGYTDMVKILMKHSDSVLA), 90–119 (NGFDAFHIAAKNGNLQVLDVLIEANPELSF), 124–153 (SKTTALHTAASQGHGEIVCFLLDKGVDLAA), 158–187 (NGKTALHSAARNGHTVIVKKLIEKKAGMVT), 192–222 (KGQTALHMAVKGQNTEIVDVLMEADGSLINS), 226–255 (KGNTPLHIAVRKNRAEIVQTVLKYCEVSRV), and 260–289 (SGETALDIAEKTGLHEIVPLLQKIGMQNAR). A run of 4 helical transmembrane segments spans residues 349–369 (AINSTTLVAILIATVAFAAIF), 399–419 (FLIFVVFDSFALFISLAVVVV), 441–461 (LMWMACIMISVAFVSLSFVVV), and 472–492 (VTAIGALIMVSTLGTMCYWVI). Ser-508 is subject to Phosphoserine.

The protein resides in the membrane. The protein is Ankyrin repeat-containing protein At5g02620 of Arabidopsis thaliana (Mouse-ear cress).